Here is a 300-residue protein sequence, read N- to C-terminus: uncharacterized protein (300 aa).

Residues 1–20 (MRLLISCILILSILVNFISG) form the signal peptide. Over 21-279 (HAVLVAPTPF…PCSIYGDGNG (259 aa)) the chain is Extracellular. N-linked (GlcNAc...) asparagine glycosylation is found at Asn-56, Asn-217, and Asn-278. Residues 280 to 300 (SNLIIIPTLLIISILSLILMF) traverse the membrane as a helical segment.

The protein resides in the membrane. This is an uncharacterized protein from Dictyostelium discoideum (Social amoeba).